A 936-amino-acid polypeptide reads, in one-letter code: VPS35 endosomal protein-sorting factor-like (936 aa).

Disordered regions lie at residues 43-69 (SKTK…VDPL) and 87-113 (DPAA…VGPD). Positions 51–69 (KGSTSSTSSSSSSSVVDPL) are enriched in low complexity. Ser265 bears the Phosphoserine mark. A helical membrane pass occupies residues 672-692 (AFVRACVAYCFITIPSLVGIF).

It belongs to the VPS35L family. As to quaternary structure, component of the heterotrimeric retriever complex formed by VPS26C, VPS29 and VPS35L. Interacts with VPS29. Interacts with COMMD1, CCDC93 and CCDC22; associates with the CCC (COMMD/CCDC22/CCDC93) complex which contains at least COMMD1 (and possibly other COMM domain-containing proteins), CCDC22 and CCDC93. Interacts with WASHC1, WASHC2A and WASHC2C. Interacts with SNX17 and SNX31.

The protein localises to the membrane. Its subcellular location is the endosome. Its function is as follows. Acts as a component of the retriever complex. The retriever complex is a heterotrimeric complex related to retromer cargo-selective complex (CSC) and essential for retromer-independent retrieval and recycling of numerous cargos such as integrin alpha-5/beta-1 (ITGA5:ITGB1). The recruitment of the retriever complex to the endosomal membrane involves CCC and WASH complexes. In the endosomes, drives the retrieval and recycling of NxxY-motif-containing cargo proteins by coupling to SNX17, a cargo essential for the homeostatic maintenance of numerous cell surface proteins associated with processes that include cell migration, cell adhesion, nutrient supply and cell signaling. Involved in copper-dependent ATP7A trafficking between the trans-Golgi network and vesicles in the cell periphery; the function is proposed to depend on its association with the CCC complex and cooperation with the WASH complex on early endosomes. Seems not to be required for CCC complex stability. The sequence is that of VPS35 endosomal protein-sorting factor-like from Rattus norvegicus (Rat).